A 50-amino-acid chain; its full sequence is ATP synthase protein 8 (50 aa).

Residues 13–32 (ITFTFIILAITVYILSKYIL) form a helical membrane-spanning segment.

The protein belongs to the ATPase protein 8 family. In terms of assembly, F-type ATPases have 2 components, CF(1) - the catalytic core - and CF(0) - the membrane proton channel.

The protein resides in the mitochondrion membrane. Functionally, mitochondrial membrane ATP synthase (F(1)F(0) ATP synthase or Complex V) produces ATP from ADP in the presence of a proton gradient across the membrane which is generated by electron transport complexes of the respiratory chain. F-type ATPases consist of two structural domains, F(1) - containing the extramembraneous catalytic core and F(0) - containing the membrane proton channel, linked together by a central stalk and a peripheral stalk. During catalysis, ATP synthesis in the catalytic domain of F(1) is coupled via a rotary mechanism of the central stalk subunits to proton translocation. Part of the complex F(0) domain. Minor subunit located with subunit a in the membrane. The chain is ATP synthase protein 8 (ATP8) from Podospora anserina (strain S / ATCC MYA-4624 / DSM 980 / FGSC 10383) (Pleurage anserina).